We begin with the raw amino-acid sequence, 238 residues long: Flagellar L-ring protein (238 aa).

The first 16 residues, 1–16 (MNKAILAVAMVLLLAG), serve as a signal peptide directing secretion. The N-palmitoyl cysteine moiety is linked to residue Cys17. A lipid anchor (S-diacylglycerol cysteine) is attached at Cys17.

This sequence belongs to the FlgH family. In terms of assembly, the basal body constitutes a major portion of the flagellar organelle and consists of four rings (L,P,S, and M) mounted on a central rod.

It localises to the cell outer membrane. It is found in the bacterial flagellum basal body. Functionally, assembles around the rod to form the L-ring and probably protects the motor/basal body from shearing forces during rotation. The sequence is that of Flagellar L-ring protein from Brucella canis (strain ATCC 23365 / NCTC 10854 / RM-666).